The chain runs to 217 residues: LexA repressor (217 aa).

Residues 26–46 (FEEMKLALDLKSKSGIHRLIK) constitute a DNA-binding region (H-T-H motif). Active-site for autocatalytic cleavage activity residues include S138 and K176.

The protein belongs to the peptidase S24 family. In terms of assembly, homodimer.

The catalysed reaction is Hydrolysis of Ala-|-Gly bond in repressor LexA.. In terms of biological role, represses a number of genes involved in the response to DNA damage (SOS response), including recA and lexA. In the presence of single-stranded DNA, RecA interacts with LexA causing an autocatalytic cleavage which disrupts the DNA-binding part of LexA, leading to derepression of the SOS regulon and eventually DNA repair. The protein is LexA repressor of Zymomonas mobilis subsp. mobilis (strain ATCC 31821 / ZM4 / CP4).